We begin with the raw amino-acid sequence, 343 residues long: MIKLSNITKVFQQGARTIQALNNVSLHVPAGQIYGVIGASGAGKSTLIRCVNLLERPTEGSVMVGGQELTTLSESGLTKARRQIGMIFQHFNLLSSRTVFGNVALPLELDNTPKEEIKRRVTELLDLVGLGDKHDSYPANLSGGQKQRVAIARALASNPKVLLCDEATSALDPATTRSILELLKDINRRLGLTILLITHEMDVVKRICDCVAVISNGELIEQDTVSEVFSHPKTPLAQKFIQSTLHLDIPEDYQARLKASPETDSVPMLRMEFTGQSVDAPLLSETARRFNVNNNIISAQMDYAGGVKFGIMLTEMHGTQEETQAAIAWLQDHHVKVEVLGYV.

Residues 2 to 241 enclose the ABC transporter domain; the sequence is IKLSNITKVF…PKTPLAQKFI (240 aa). 38 to 45 is an ATP binding site; that stretch reads GASGAGKS.

It belongs to the ABC transporter superfamily. Methionine importer (TC 3.A.1.24) family. In terms of assembly, the complex is composed of two ATP-binding proteins (MetN), two transmembrane proteins (MetI) and a solute-binding protein (MetQ).

It localises to the cell inner membrane. The catalysed reaction is L-methionine(out) + ATP + H2O = L-methionine(in) + ADP + phosphate + H(+). It carries out the reaction D-methionine(out) + ATP + H2O = D-methionine(in) + ADP + phosphate + H(+). Functionally, part of the ABC transporter complex MetNIQ involved in methionine import. Responsible for energy coupling to the transport system. This chain is Methionine import ATP-binding protein MetN 1, found in Salmonella typhi.